The chain runs to 130 residues: Small ribosomal subunit protein uS11c (130 aa).

Belongs to the universal ribosomal protein uS11 family. Part of the 30S ribosomal subunit.

It is found in the plastid. The protein resides in the chloroplast. The sequence is that of Small ribosomal subunit protein uS11c from Tupiella akineta (Green alga).